Here is a 257-residue protein sequence, read N- to C-terminus: Alcohol dehydrogenase 1 (257 aa).

9–33 is a binding site for NAD(+); that stretch reads VFVGGLGFIAYEACKYLMNNDLASL. S137 lines the substrate pocket. The active-site Proton acceptor is Y150.

Belongs to the short-chain dehydrogenases/reductases (SDR) family. Homodimer.

It catalyses the reaction a primary alcohol + NAD(+) = an aldehyde + NADH + H(+). The catalysed reaction is a secondary alcohol + NAD(+) = a ketone + NADH + H(+). The protein is Alcohol dehydrogenase 1 (ADH1) of Ceratitis capitata (Mediterranean fruit fly).